The sequence spans 115 residues: Large ribosomal subunit protein bL19 (115 aa).

Belongs to the bacterial ribosomal protein bL19 family.

Functionally, this protein is located at the 30S-50S ribosomal subunit interface and may play a role in the structure and function of the aminoacyl-tRNA binding site. This is Large ribosomal subunit protein bL19 from Francisella tularensis subsp. holarctica (strain FTNF002-00 / FTA).